Consider the following 432-residue polypeptide: MLGNSAPGPATREAGSALLALQQTALQEDQENINPEKAAPVQQPRTRAALAVLKSGNPRGLAQQQRPKTRRVAPLKDLPVNDEHVTVPPWKANSKQPAFTIHVDEAEKEAQKKPAESQKIEREDALAFNSAISLPGPRKPLVPLDYPMDGSFESPHTMDMSIILEDEKPVSVNEVPDYHEDIHTYLREMEVKCKPKVGYMKKQPDITNSMRAILVDWLVEVGEEYKLQNETLHLAVNYIDRFLSSMSVLRGKLQLVGTAAMLLASKFEEIYPPEVAEFVYITDDTYTKKQVLRMEHLVLKVLTFDLAAPTVNQFLTQYFLHQQPANCKVESLAMFLGELSLIDADPYLKYLPSVIAGAAFHLALYTVTGQSWPESLIRKTGYTLESLKPCLMDLHQTYLKAPQHAQQSIREKYKNSKYHGVSLLNPPETLNL.

Met-1 carries the post-translational modification N-acetylmethionine. Residue Ser-5 is modified to Phosphoserine. 2 disordered regions span residues 26–45 (LQED…QQPR) and 55–75 (SGNP…VAPL). Ser-55 carries the post-translational modification Phosphoserine.

The protein belongs to the cyclin family. Cyclin AB subfamily. As to quaternary structure, interacts with the CDK1 and CDK2 protein kinases to form serine/threonine kinase holoenzyme complexes. Interacts with CDK1 (hyperphosphorylated form in G1 and underphosphorylated forms in S and G2). Interacts with CDK2; the interaction increases from G1 to G2. Interacts (associated with CDK2 but not with CDK1) with SCAPER; regulates the activity of CCNA2/CDK2 by transiently maintaining CCNA2 in the cytoplasm. Forms a ternary complex with CDK2 and CDKN1B; CDKN1B inhibits the kinase activity of CDK2 through conformational rearrangements. Interacts with INCA1. (Microbial infection) Interacts with human cytomegalovirus protein UL32. Polyubiquitinated via 'Lys-11'-linked ubiquitin by the anaphase-promoting complex (APC/C), leading to its degradation by the proteasome. Deubiquitinated and stabilized by USP37 enables entry into S phase. Ubiquitinated during the G1 phase by the SCF(FBXO31) complex, leading to its proteasomal degradation.

The protein localises to the nucleus. It is found in the cytoplasm. Functionally, cyclin which controls both the G1/S and the G2/M transition phases of the cell cycle. Functions through the formation of specific serine/threonine protein kinase holoenzyme complexes with the cyclin-dependent protein kinases CDK1 or CDK2. The cyclin subunit confers the substrate specificity of these complexes and differentially interacts with and activates CDK1 and CDK2 throughout the cell cycle. The protein is Cyclin-A2 of Homo sapiens (Human).